The primary structure comprises 102 residues: Feather keratin (102 aa).

Serine 1 is modified (N-acetylserine).

The protein belongs to the avian keratin family. In terms of assembly, the avian keratins (F-ker, S-ker, C-ker and B-ker) are a complex mixture of very similar polypeptides.

The sequence is that of Feather keratin from Dromaius novaehollandiae (Emu).